The chain runs to 262 residues: Troponin T, slow skeletal muscle (262 aa).

Over residues 1 to 31 (MSDTEEQEYEEEQAEDEEAVEEEEAPEEPEP) the composition is skewed to acidic residues. Disordered regions lie at residues 1 to 62 (MSDT…ERVD) and 109 to 153 (ERAE…KKKV). Ser-2 bears the Phosphoserine; by CK2 mark. Residues 32–41 (VAEREEERPK) show a composition bias toward basic and acidic residues. A compositionally biased stretch (pro residues) spans 43–55 (SRPVVPPLIPPKI). Over residues 109-149 (ERAEQQRFRTEKERERQAKLAEEKMRKEEEEAKKRAEDDAK) the composition is skewed to basic and acidic residues.

This sequence belongs to the troponin T family. Interacts with TPM3. In terms of tissue distribution, expressed in adult soleus muscle.

Troponin T is the tropomyosin-binding subunit of troponin, the thin filament regulatory complex which confers calcium-sensitivity to striated muscle actomyosin ATPase activity. The chain is Troponin T, slow skeletal muscle (Tnnt1) from Mus musculus (Mouse).